The chain runs to 343 residues: N-acetyl-gamma-glutamyl-phosphate reductase (343 aa).

Cys-147 is an active-site residue.

Belongs to the NAGSA dehydrogenase family. Type 1 subfamily.

Its subcellular location is the cytoplasm. It catalyses the reaction N-acetyl-L-glutamate 5-semialdehyde + phosphate + NADP(+) = N-acetyl-L-glutamyl 5-phosphate + NADPH + H(+). Its pathway is amino-acid biosynthesis; L-arginine biosynthesis; N(2)-acetyl-L-ornithine from L-glutamate: step 3/4. Functionally, catalyzes the NADPH-dependent reduction of N-acetyl-5-glutamyl phosphate to yield N-acetyl-L-glutamate 5-semialdehyde. The protein is N-acetyl-gamma-glutamyl-phosphate reductase of Staphylococcus aureus (strain USA300).